The chain runs to 116 residues: Large ribosomal subunit protein uL18 (116 aa).

It belongs to the universal ribosomal protein uL18 family. In terms of assembly, part of the 50S ribosomal subunit; part of the 5S rRNA/L5/L18/L25 subcomplex. Contacts the 5S and 23S rRNAs.

This is one of the proteins that bind and probably mediate the attachment of the 5S RNA into the large ribosomal subunit, where it forms part of the central protuberance. This Shewanella denitrificans (strain OS217 / ATCC BAA-1090 / DSM 15013) protein is Large ribosomal subunit protein uL18.